The sequence spans 78 residues: Small acidic protein 2 (78 aa).

As to expression, expressed in siliques and anthers.

In terms of biological role, mediates responses to the synthetic auxin 2,4-dichlorophenoxyacetic acid (2,4-D). Not involved in the response to indole-3-acetic acid (IAA). May interact with RUB modification-related components and may regulate the culling-ring ubiquitin E3 ligase complex (CRL) activity. The sequence is that of Small acidic protein 2 (SMAP2) from Arabidopsis thaliana (Mouse-ear cress).